A 152-amino-acid polypeptide reads, in one-letter code: uncharacterized protein (152 aa).

5 helical membrane passes run Gly-2–Met-22, Leu-33–Met-53, Phe-58–Leu-78, Phe-97–Val-117, and Ile-122–Cys-142.

The protein resides in the cell membrane. This is an uncharacterized protein from Methanocaldococcus jannaschii (strain ATCC 43067 / DSM 2661 / JAL-1 / JCM 10045 / NBRC 100440) (Methanococcus jannaschii).